A 907-amino-acid chain; its full sequence is Gamma-tubulin complex component 3 (907 aa).

Position 2 is an N-acetylalanine (Ala-2). Ser-113 is subject to Phosphoserine. Residues 210–230 (NQPSSQATTSKGVPSAVSRNM) are compositionally biased toward polar residues. Residues 210–241 (NQPSSQATTSKGVPSAVSRNMTRSRREGDTGG) are disordered.

It belongs to the TUBGCP family. As to quaternary structure, component of the gamma-tubulin ring complex (gTuRC) consisting of TUBGCP2, TUBGCP3, TUBGCP4, TUBGCP5 and TUBGCP6 and gamma-tubulin TUBG1 or TUBG2. TUBGCP2, TUBGCP3, TUBGCP4, TUBGCP5 and TUBGCP6 assemble in a 5:5:2:1:1 stoichiometry; each is associated with a gamma-tubulin, thereby arranging 14 gamma-tubulins in a helical manner. Gamma-tubulin at the first position is blocked by TUBGCP3 at the last position, allowing 13 protafilaments to grow into a microtubule. The gTuRC (via TUBGCP3 and TUBGCP6) interacts with ACTB and MZT1; the interactions form a luminal bridge that stabilizes the initial structure during complex assembly. The gTuRC (via TUBGCP2) interacts with MZT2A/MZT2B and CDK5RAP2 (via CM1 motif); the interactions play a role in gTuRC activation. Interacts with NIN (via N-terminus); the interaction may promote recruitment of the gamma-tubulin ring complex to the centrosome. As to expression, ubiquitously expressed.

Its subcellular location is the cytoplasm. The protein resides in the cytoskeleton. It is found in the microtubule organizing center. It localises to the centrosome. In terms of biological role, component of the gamma-tubulin ring complex (gTuRC) which mediates microtubule nucleation. The gTuRC regulates the minus-end nucleation of alpha-beta tubulin heterodimers that grow into microtubule protafilaments, a critical step in centrosome duplication and spindle formation. The protein is Gamma-tubulin complex component 3 (TUBGCP3) of Homo sapiens (Human).